The following is a 105-amino-acid chain: Malonate decarboxylase acyl carrier protein (105 aa).

Ser28 bears the O-(phosphoribosyl dephospho-coenzyme A)serine mark.

Belongs to the MdcC family. Post-translationally, covalently binds the prosthetic group of malonate decarboxylase.

It localises to the cytoplasm. In terms of biological role, subunit of malonate decarboxylase, it is an acyl carrier protein to which acetyl and malonyl thioester residues are bound via a 2'-(5''-phosphoribosyl)-3'-dephospho-CoA prosthetic group and turn over during the catalytic mechanism. This is Malonate decarboxylase acyl carrier protein from Xanthomonas euvesicatoria pv. vesicatoria (strain 85-10) (Xanthomonas campestris pv. vesicatoria).